We begin with the raw amino-acid sequence, 284 residues long: Proteasome subunit beta (284 aa).

A propeptide spans 1–56 (removed in mature form; by autocatalysis); it reads MSPMESSSTRFPGQALPAAYLTPGSSSFTDFLRVAAPELMPGSRPVPDGAVEAPHG. Threonine 57 functions as the Nucleophile in the catalytic mechanism.

Belongs to the peptidase T1B family. As to quaternary structure, the 20S proteasome core is composed of 14 alpha and 14 beta subunits that assemble into four stacked heptameric rings, resulting in a barrel-shaped structure. The two inner rings, each composed of seven catalytic beta subunits, are sandwiched by two outer rings, each composed of seven alpha subunits. The catalytic chamber with the active sites is on the inside of the barrel. Has a gated structure, the ends of the cylinder being occluded by the N-termini of the alpha-subunits. Is capped by the proteasome-associated ATPase, ARC.

It localises to the cytoplasm. It carries out the reaction Cleavage of peptide bonds with very broad specificity.. It participates in protein degradation; proteasomal Pup-dependent pathway. Its activity is regulated as follows. The formation of the proteasomal ATPase ARC-20S proteasome complex, likely via the docking of the C-termini of ARC into the intersubunit pockets in the alpha-rings, may trigger opening of the gate for substrate entry. Interconversion between the open-gate and close-gate conformations leads to a dynamic regulation of the 20S proteasome proteolysis activity. Component of the proteasome core, a large protease complex with broad specificity involved in protein degradation. This Saccharopolyspora erythraea (strain ATCC 11635 / DSM 40517 / JCM 4748 / NBRC 13426 / NCIMB 8594 / NRRL 2338) protein is Proteasome subunit beta.